The chain runs to 891 residues: Receptor-like protein 50 (891 aa).

An N-terminal signal peptide occupies residues 1-22 (MITIIWSLCLIFCLSNSILVIA). Over 23–849 (KDLCLPDQRD…KEEKDKGLSW (827 aa)) the chain is Extracellular. Residues Asn-62 and Asn-98 are each glycosylated (N-linked (GlcNAc...) asparagine). LRR repeat units lie at residues 105 to 130 (QHLQSLDLSYNDLSCTLPDSSGNFKY), 132 to 152 (RVLNLLGCNLFGEIPTSLRSL), 153 to 176 (SYLTDLDLSYNDDLTGEILDSMGN), 177 to 201 (LKHLRVLSLTSCKFTGKIPSSLGNL), 203 to 225 (YLTDLDLSWNYFTGELPDSMGNL), 226 to 249 (KSLRVLNLHRCNFFGKIPTSLGSL), and 250 to 272 (SNLTDLDISKNEFTSEGPDSMSS). N-linked (GlcNAc...) asparagine glycosylation is present at Asn-200. 3 N-linked (GlcNAc...) asparagine glycosylation sites follow: Asn-251, Asn-285, and Asn-306. 4 LRR repeats span residues 286-309 (LSSLTNVDLSSNQFKAMLPSNMSS), 310-334 (LSKLEAFDISGNSFSGTIPSSLFML), 336-358 (SLIKLDLGTNDFSGPLKIGNISS), and 359-383 (PSNLQELYIGENNINGPIPRSILKL). N-linked (GlcNAc...) asparagine glycosylation occurs at Asn-355. Residues 384-407 (VGLSALSLSFWDTGGIVDFSIFLQ) form an LRR 12; degenerate repeat. LRR repeat units lie at residues 408 to 436 (LKSLRSLDLSGINLNISSSHHLPSHMMHL), 438 to 453 (LSSCNISQFPKFLENQ), 454 to 477 (TSLYHLDISANQIEGQVPEWLWRL), 478 to 504 (PTLRYVNIAQNAFSGELTMLPNPIYSF), 506 to 519 (ASDNKFSGEIPRAV), 520 to 544 (CEIGTLVLSNNNFSGSIPPCFEISN), 545 to 568 (KTLSILHLRNNSLSGVIPEESLHG), 570 to 591 (LRSLDVGSNRLSGQFPKSLINC), 593 to 614 (YLQFLNVEENRINDTFPSWLKS), 615 to 641 (LPNLQLLVLRSNEFHGPIFSPGDSLSF), 642 to 665 (SKLRFFDISENRFSGVLPSDYFVG), 712 to 736 (FEIYKTIDVSGNRLEGDIPESIGIL), 737 to 760 (KELIVLNMSNNAFTGHIPPSLSNL), 761 to 784 (SNLQSLDLSQNRLSGSIPGELGEL), and 786 to 809 (FLARMNFSYNMLEGPIPQGTQIQS). 3 N-linked (GlcNAc...) asparagine glycosylation sites follow: Asn-422, Asn-442, and Asn-452. N-linked (GlcNAc...) asparagine glycans are attached at residues Asn-531, Asn-544, Asn-554, Asn-590, and Asn-605. 2 N-linked (GlcNAc...) asparagine glycosylation sites follow: Asn-743 and Asn-759. Asn-791 and Asn-811 each carry an N-linked (GlcNAc...) asparagine glycan. Residues 850–870 (VAAAIGYVPGLFCGLAIGHIL) traverse the membrane as a helical segment. Over 871–891 (TSYKRDWFMRIFSCFSSPLKK) the chain is Cytoplasmic.

It belongs to the RLP family.

Its subcellular location is the cell membrane. This Arabidopsis thaliana (Mouse-ear cress) protein is Receptor-like protein 50.